A 707-amino-acid polypeptide reads, in one-letter code: Polyribonucleotide nucleotidyltransferase (707 aa).

2 residues coordinate Mg(2+): D487 and D493. Residues 554–613 form the KH domain; it reads PKILTMNINPDKIRDVIGPSGKQINKIIEDTGVKIDIEQDGTIFISSTDESSNQKAKKII. The 69-residue stretch at 623 to 691 folds into the S1 motif domain; sequence GQLYLGKVKR…KQGRVNLSRK (69 aa).

This sequence belongs to the polyribonucleotide nucleotidyltransferase family. Requires Mg(2+) as cofactor.

The protein resides in the cytoplasm. It catalyses the reaction RNA(n+1) + phosphate = RNA(n) + a ribonucleoside 5'-diphosphate. In terms of biological role, involved in mRNA degradation. Catalyzes the phosphorolysis of single-stranded polyribonucleotides processively in the 3'- to 5'-direction. This Bacillus velezensis (strain DSM 23117 / BGSC 10A6 / LMG 26770 / FZB42) (Bacillus amyloliquefaciens subsp. plantarum) protein is Polyribonucleotide nucleotidyltransferase.